A 180-amino-acid chain; its full sequence is MAEFDLCALFSSLKVGDVSSSDELKKHIQSASKERTPLTEPGEGQSMDIDEEGGRQDPGILYLYVDCPTMMRCFYGGSLPYNSRHGALITNLPPYQKDVSLGEVCRGLRQASGFFGYEDVIRSAYFAALSVPGYFVKLDGQMELTSTKGKSLTFDLYASNQLRLEPGALVRHGECKFGME.

The segment covering 26–37 (KHIQSASKERTP) has biased composition (basic and acidic residues). The segment at 26–54 (KHIQSASKERTPLTEPGEGQSMDIDEEGG) is disordered.

In terms of biological role, hydrolyzes cytokinin glucosides thus liberating free cytokinins. Contributes to the root inducing activity. This is Cytokinin-beta-glucosidase (rolC) from Rhizobium rhizogenes (Agrobacterium rhizogenes).